The sequence spans 236 residues: Purine nucleoside phosphorylase DeoD-type (236 aa).

H4 is a binding site for a purine D-ribonucleoside. Residues G20, R24, R43, and 87–90 (RVGS) each bind phosphate. A purine D-ribonucleoside is bound by residues 179–181 (EME) and 203–204 (SD). Catalysis depends on D204, which acts as the Proton donor.

This sequence belongs to the PNP/UDP phosphorylase family. In terms of assembly, homohexamer; trimer of homodimers.

It carries out the reaction a purine D-ribonucleoside + phosphate = a purine nucleobase + alpha-D-ribose 1-phosphate. The catalysed reaction is a purine 2'-deoxy-D-ribonucleoside + phosphate = a purine nucleobase + 2-deoxy-alpha-D-ribose 1-phosphate. Functionally, catalyzes the reversible phosphorolytic breakdown of the N-glycosidic bond in the beta-(deoxy)ribonucleoside molecules, with the formation of the corresponding free purine bases and pentose-1-phosphate. In Limosilactobacillus reuteri (strain DSM 20016) (Lactobacillus reuteri), this protein is Purine nucleoside phosphorylase DeoD-type.